A 274-amino-acid polypeptide reads, in one-letter code: Cytochrome c oxidase subunit 3 (274 aa).

Residues 1-15 lie on the Mitochondrial matrix side of the membrane; it reads MTHQTHAYHMVNPSP. The chain crosses the membrane as a helical span at residues 16–34; the sequence is WPLTGALSALLMTSGLAMW. Over 35–40 the chain is Mitochondrial intermembrane; the sequence is FHFNSS. Residues 41–66 traverse the membrane as a helical segment; sequence MLLSLGMLTNLLTMYQWWRDIVREGT. Residues 67-72 lie on the Mitochondrial matrix side of the membrane; that stretch reads FQGHHT. Residues 73–105 form a helical membrane-spanning segment; it reads SIVQKGLRYGMVLFIISEIFFFAGFFWAFYHSS. The Mitochondrial intermembrane portion of the chain corresponds to 106-128; that stretch reads LAPTPELGGCWPPTGIHPLNPLE. The helical transmembrane segment at 129–152 threads the bilayer; it reads VPLLNTAVLLASGVSITWAHHSLM. The Mitochondrial matrix portion of the chain corresponds to 153–155; that stretch reads EGN. A helical transmembrane segment spans residues 156–183; the sequence is RVQMLQALLITITLGLYFTLLQASEYFE. Topologically, residues 184–190 are mitochondrial intermembrane; the sequence is TSFTISD. The chain crosses the membrane as a helical span at residues 191-223; that stretch reads GVYGSTFFMATGFHGLHVIIGSTFLTVCFFRQL. Over 224 to 232 the chain is Mitochondrial matrix; it reads SFHFTSNHH. A helical transmembrane segment spans residues 233–256; sequence FGFEAAAWYWHFVDVVWLFLYVSI. The Mitochondrial intermembrane segment spans residues 257 to 274; that stretch reads YWWGSYSFSIDPMQLTSN.

This sequence belongs to the cytochrome c oxidase subunit 3 family. Component of the cytochrome c oxidase (complex IV, CIV), a multisubunit enzyme composed of 14 subunits. The complex is composed of a catalytic core of 3 subunits MT-CO1, MT-CO2 and MT-CO3, encoded in the mitochondrial DNA, and 11 supernumerary subunits COX4I, COX5A, COX5B, COX6A, COX6B, COX6C, COX7A, COX7B, COX7C, COX8 and NDUFA4, which are encoded in the nuclear genome. The complex exists as a monomer or a dimer and forms supercomplexes (SCs) in the inner mitochondrial membrane with NADH-ubiquinone oxidoreductase (complex I, CI) and ubiquinol-cytochrome c oxidoreductase (cytochrome b-c1 complex, complex III, CIII), resulting in different assemblies (supercomplex SCI(1)III(2)IV(1) and megacomplex MCI(2)III(2)IV(2)).

It localises to the mitochondrion inner membrane. It catalyses the reaction 4 Fe(II)-[cytochrome c] + O2 + 8 H(+)(in) = 4 Fe(III)-[cytochrome c] + 2 H2O + 4 H(+)(out). Component of the cytochrome c oxidase, the last enzyme in the mitochondrial electron transport chain which drives oxidative phosphorylation. The respiratory chain contains 3 multisubunit complexes succinate dehydrogenase (complex II, CII), ubiquinol-cytochrome c oxidoreductase (cytochrome b-c1 complex, complex III, CIII) and cytochrome c oxidase (complex IV, CIV), that cooperate to transfer electrons derived from NADH and succinate to molecular oxygen, creating an electrochemical gradient over the inner membrane that drives transmembrane transport and the ATP synthase. Cytochrome c oxidase is the component of the respiratory chain that catalyzes the reduction of oxygen to water. Electrons originating from reduced cytochrome c in the intermembrane space (IMS) are transferred via the dinuclear copper A center (CU(A)) of subunit 2 and heme A of subunit 1 to the active site in subunit 1, a binuclear center (BNC) formed by heme A3 and copper B (CU(B)). The BNC reduces molecular oxygen to 2 water molecules using 4 electrons from cytochrome c in the IMS and 4 protons from the mitochondrial matrix. The sequence is that of Cytochrome c oxidase subunit 3 (MT-CO3) from Lemur catta (Ring-tailed lemur).